A 185-amino-acid polypeptide reads, in one-letter code: Ribosome-recycling factor (185 aa).

It belongs to the RRF family.

The protein localises to the cytoplasm. Functionally, responsible for the release of ribosomes from messenger RNA at the termination of protein biosynthesis. May increase the efficiency of translation by recycling ribosomes from one round of translation to another. This is Ribosome-recycling factor from Aeromonas hydrophila subsp. hydrophila (strain ATCC 7966 / DSM 30187 / BCRC 13018 / CCUG 14551 / JCM 1027 / KCTC 2358 / NCIMB 9240 / NCTC 8049).